The following is a 191-amino-acid chain: ECF RNA polymerase sigma factor ShbA (191 aa).

The segment at 27-98 (LLAHVHPLAL…HKVADLQRAA (72 aa)) is sigma-70 factor domain-2. A disordered region spans residues 100-122 (RHPGSTAVPSDEMPERPDDSLGP). The segment covering 112–122 (MPERPDDSLGP) has biased composition (basic and acidic residues). Residues 138 to 187 (LLANLPENQRELLVLRVAVGLTAEETGQMLGMSPGAVRVAQHRALSRLRA) form a sigma-70 factor domain-4 region. A DNA-binding region (H-T-H motif) is located at residues 160 to 179 (AEETGQMLGMSPGAVRVAQH).

Belongs to the sigma-70 factor family. ECF subfamily.

Sigma factors are initiation factors that promote the attachment of RNA polymerase to specific initiation sites and are then released. Extracytoplasmic function (ECF) sigma factors are held in an inactive form by an anti-sigma factor until released. This alternative sigma factor governs the transcription of the principal sigma factor HrdB (SigA) throughout growth. Acts by binding to the promoter region. The chain is ECF RNA polymerase sigma factor ShbA from Streptomyces griseus subsp. griseus (strain JCM 4626 / CBS 651.72 / NBRC 13350 / KCC S-0626 / ISP 5235).